The sequence spans 116 residues: UPF0102 protein ELI_05985 (116 aa).

This sequence belongs to the UPF0102 family.

This is UPF0102 protein ELI_05985 from Erythrobacter litoralis (strain HTCC2594).